The primary structure comprises 263 residues: MSLNPVIFSIGPVSIYWYSLAYVLGIVFAYWYLHRLDDQKIFTKNFYDSLLTATIVGIILGGRLGYVLIYDPVLYISNPIEILKTWEGGMSFHGGAIGVLLAVIISCRRHNIPIFYALDLVSCGVPIGLFLGRIGNFINGELFGRVTTMPWGMVFPESGDNLLHHPSQLYEALFEGLLLFAVANSLFFLTRIRLYHGALTGIAVMWYGIARFFVEFFREPDYQIGYLWLDLTMGQLLSIPMVLLGMLVYLGALNLKFNTKSVT.

4 helical membrane passes run 6-26, 50-70, 85-105, and 112-132; these read VIFSIGPVSIYWYSLAYVLGI, LLTATIVGIILGGRLGYVLIY, TWEGGMSFHGGAIGVLLAVII, and IPIFYALDLVSCGVPIGLFLG. Arg-133 contacts a 1,2-diacyl-sn-glycero-3-phospho-(1'-sn-glycerol). The next 3 membrane-spanning stretches (helical) occupy residues 169–189, 197–217, and 233–253; these read LYEALFEGLLLFAVANSLFFL, GALTGIAVMWYGIARFFVEFF, and MGQLLSIPMVLLGMLVYLGAL.

The protein belongs to the Lgt family.

It is found in the cell membrane. The enzyme catalyses L-cysteinyl-[prolipoprotein] + a 1,2-diacyl-sn-glycero-3-phospho-(1'-sn-glycerol) = an S-1,2-diacyl-sn-glyceryl-L-cysteinyl-[prolipoprotein] + sn-glycerol 1-phosphate + H(+). It participates in protein modification; lipoprotein biosynthesis (diacylglyceryl transfer). Its function is as follows. Catalyzes the transfer of the diacylglyceryl group from phosphatidylglycerol to the sulfhydryl group of the N-terminal cysteine of a prolipoprotein, the first step in the formation of mature lipoproteins. The polypeptide is Phosphatidylglycerol--prolipoprotein diacylglyceryl transferase (Wolbachia sp. subsp. Drosophila simulans (strain wRi)).